Reading from the N-terminus, the 738-residue chain is 1,4-alpha-glucan branching enzyme GlgB (738 aa).

Aspartate 399 serves as the catalytic Nucleophile. Residue glutamate 452 is the Proton donor of the active site.

The protein belongs to the glycosyl hydrolase 13 family. GlgB subfamily. In terms of assembly, monomer.

It catalyses the reaction Transfers a segment of a (1-&gt;4)-alpha-D-glucan chain to a primary hydroxy group in a similar glucan chain.. Its pathway is glycan biosynthesis; glycogen biosynthesis. Its function is as follows. Catalyzes the formation of the alpha-1,6-glucosidic linkages in glycogen by scission of a 1,4-alpha-linked oligosaccharide from growing alpha-1,4-glucan chains and the subsequent attachment of the oligosaccharide to the alpha-1,6 position. The protein is 1,4-alpha-glucan branching enzyme GlgB of Chlamydia trachomatis serovar L2 (strain ATCC VR-902B / DSM 19102 / 434/Bu).